Reading from the N-terminus, the 282-residue chain is Bis(5'-nucleosyl)-tetraphosphatase, symmetrical (282 aa).

Belongs to the Ap4A hydrolase family.

The catalysed reaction is P(1),P(4)-bis(5'-adenosyl) tetraphosphate + H2O = 2 ADP + 2 H(+). In terms of biological role, hydrolyzes diadenosine 5',5'''-P1,P4-tetraphosphate to yield ADP. The polypeptide is Bis(5'-nucleosyl)-tetraphosphatase, symmetrical (Enterobacter sp. (strain 638)).